Here is a 259-residue protein sequence, read N- to C-terminus: Deoxyribose-phosphate aldolase (259 aa).

Asp-102 functions as the Proton donor/acceptor in the catalytic mechanism. Lys-167 serves as the catalytic Schiff-base intermediate with acetaldehyde. Residue Lys-201 is the Proton donor/acceptor of the active site.

It belongs to the DeoC/FbaB aldolase family. DeoC type 2 subfamily.

It localises to the cytoplasm. It catalyses the reaction 2-deoxy-D-ribose 5-phosphate = D-glyceraldehyde 3-phosphate + acetaldehyde. It functions in the pathway carbohydrate degradation; 2-deoxy-D-ribose 1-phosphate degradation; D-glyceraldehyde 3-phosphate and acetaldehyde from 2-deoxy-alpha-D-ribose 1-phosphate: step 2/2. In terms of biological role, catalyzes a reversible aldol reaction between acetaldehyde and D-glyceraldehyde 3-phosphate to generate 2-deoxy-D-ribose 5-phosphate. This is Deoxyribose-phosphate aldolase from Serratia proteamaculans (strain 568).